The chain runs to 775 residues: 1,4-alpha-glucan branching enzyme GlgB (775 aa).

Catalysis depends on aspartate 431, which acts as the Nucleophile. Glutamate 484 acts as the Proton donor in catalysis.

It belongs to the glycosyl hydrolase 13 family. GlgB subfamily. Monomer.

The catalysed reaction is Transfers a segment of a (1-&gt;4)-alpha-D-glucan chain to a primary hydroxy group in a similar glucan chain.. It functions in the pathway glycan biosynthesis; glycogen biosynthesis. Its function is as follows. Catalyzes the formation of the alpha-1,6-glucosidic linkages in glycogen by scission of a 1,4-alpha-linked oligosaccharide from growing alpha-1,4-glucan chains and the subsequent attachment of the oligosaccharide to the alpha-1,6 position. In Parasynechococcus marenigrum (strain WH8102), this protein is 1,4-alpha-glucan branching enzyme GlgB.